Consider the following 187-residue polypeptide: Putative AgrB-like protein 1 (187 aa).

A run of 5 helical transmembrane segments spans residues 29–49, 50–70, 81–98, 103–120, and 149–169; these read VVIV…IAGI, LGYF…KPFI, CFIA…LVTF, LFSI…IYNK, and ILFL…TITW.

It belongs to the AgrB family.

It localises to the cell membrane. May be involved in the proteolytic processing of a quorum sensing system signal molecule precursor. The polypeptide is Putative AgrB-like protein 1 (Clostridium perfringens (strain 13 / Type A)).